Consider the following 88-residue polypeptide: Putative sulfur carrier protein AF_0554 (88 aa).

The active-site Cysteine persulfide intermediate is the Cys-26.

Belongs to the sulfur carrier protein TusA family.

This is Putative sulfur carrier protein AF_0554 from Archaeoglobus fulgidus (strain ATCC 49558 / DSM 4304 / JCM 9628 / NBRC 100126 / VC-16).